The chain runs to 120 residues: Large ribosomal subunit protein bL19 (120 aa).

This sequence belongs to the bacterial ribosomal protein bL19 family.

Functionally, this protein is located at the 30S-50S ribosomal subunit interface and may play a role in the structure and function of the aminoacyl-tRNA binding site. In Chlorobium chlorochromatii (strain CaD3), this protein is Large ribosomal subunit protein bL19.